Consider the following 145-residue polypeptide: 3-hydroxyacyl-[acyl-carrier-protein] dehydratase FabZ (145 aa).

Residue His49 is part of the active site.

It belongs to the thioester dehydratase family. FabZ subfamily.

The protein resides in the cytoplasm. The enzyme catalyses a (3R)-hydroxyacyl-[ACP] = a (2E)-enoyl-[ACP] + H2O. Functionally, involved in unsaturated fatty acids biosynthesis. Catalyzes the dehydration of short chain beta-hydroxyacyl-ACPs and long chain saturated and unsaturated beta-hydroxyacyl-ACPs. The chain is 3-hydroxyacyl-[acyl-carrier-protein] dehydratase FabZ from Ehrlichia ruminantium (strain Welgevonden).